A 33-amino-acid polypeptide reads, in one-letter code: Glutaminase-asparaginase (33 aa).

Positions asparagine 1–lysine 33 constitute an Asparaginase/glutaminase domain. The Acyl-ester intermediate role is filled by threonine 10.

This sequence belongs to the asparaginase 1 family. As to quaternary structure, homotetramer.

It localises to the periplasm. The enzyme catalyses L-glutamine + H2O = L-glutamate + NH4(+). The catalysed reaction is L-asparagine + H2O = L-aspartate + NH4(+). The protein is Glutaminase-asparaginase (ansB) of Delftia acidovorans (Pseudomonas acidovorans).